The following is a 160-amino-acid chain: Nuclear transcription factor Y subunit B-5 (160 aa).

A DNA-binding region spans residues 56 to 62 (LPIANVG). The segment at 83-94 (MQECVSEFISFV) is subunit association domain (SAD).

The protein belongs to the NFYB/HAP3 subunit family. As to quaternary structure, heterotrimeric transcription factor composed of three components, NF-YA, NF-YB and NF-YC. NF-YB and NF-YC must interact and dimerize for NF-YA association and DNA binding. In terms of tissue distribution, expressed in flowers and siliques.

Its subcellular location is the nucleus. Functionally, component of the NF-Y/HAP transcription factor complex. The NF-Y complex stimulates the transcription of various genes by recognizing and binding to a CCAAT motif in promoters. In Arabidopsis thaliana (Mouse-ear cress), this protein is Nuclear transcription factor Y subunit B-5 (NFYB5).